We begin with the raw amino-acid sequence, 1100 residues long: SLIT-ROBO Rho GTPase-activating protein 2 (1100 aa).

The region spanning 19–324 (TQVKEIRAQL…AAENLEANSD (306 aa)) is the F-BAR domain. 2 coiled-coil regions span residues 170 to 201 (YNMD…HEEK) and 363 to 400 (GELI…IQDM). The segment covering 181–203 (LKEAEKQEEKQMSRSVRHEEKQT) has biased composition (basic and acidic residues). Residues 181–210 (LKEAEKQEEKQMSRSVRHEEKQTPRSPDSL) form a disordered region. The Rho-GAP domain occupies 496-680 (VRKQEAIQII…TIIIHHESIF (185 aa)). The 60-residue stretch at 738–797 (SDPIEAIARFDYSGRTNRELSFKKGASLLLYSRASDDWWEGRHNGTEGLVPHQYIVVQDM) folds into the SH3 domain. Disordered stretches follow at residues 800 to 835 (GYAG…TGGH) and 852 to 938 (EATS…PLDP). Positions 807 to 823 (PKADLEGSHDSVEEKVS) are enriched in basic and acidic residues. Residues 919-932 (RKSTPTGRSKSFSN) show a composition bias toward polar residues. Residues 945–972 (EHSSQDIEATMNTALSELRELERQSNVK) are a coiled coil. A disordered region spans residues 986–1100 (KSGGTSEPSS…PPPTDKSCPV (115 aa)). Polar residues-rich tracts occupy residues 987 to 997 (SGGTSEPSSPL) and 1008 to 1049 (SQHP…GSTF). A compositionally biased stretch (low complexity) spans 1067–1081 (SSSAGGSPAMGSPTT). Positions 1082-1094 (TIPPTPPPPPPPT) are enriched in pro residues.

The protein localises to the cell membrane. It localises to the cell projection. Its subcellular location is the dendritic spine. The protein resides in the postsynaptic density. It is found in the postsynaptic cell membrane. The protein localises to the lamellipodium. It localises to the cytoplasmic vesicle. Its subcellular location is the phagosome. The protein resides in the nucleus. It is found in the cytoplasm. The protein localises to the cytosol. Its function is as follows. Postsynaptic RAC1 GTPase activating protein (GAP) that plays a key role in neuronal morphogenesis and migration mainly during development of the cerebral cortex. Regulates excitatory and inhibitory synapse maturation and density in cortical pyramidal neurons. Mechanistically, acts by binding and deforming membranes, thereby regulating actin dynamics to regulate cell migration and differentiation. The sequence is that of SLIT-ROBO Rho GTPase-activating protein 2 (srgap2) from Danio rerio (Zebrafish).